A 357-amino-acid chain; its full sequence is (+)-eremophilene synthase (357 aa).

Residues D100 and E105 each contribute to the Mg(2+) site. Residues D100–E105 carry the DDXXE motif motif. R198 is a substrate binding site. Mg(2+) is bound by residues N244 and S248. Residue K251 coordinates substrate. D252 is a Mg(2+) binding site. R331–Y332 serves as a coordination point for substrate.

This sequence belongs to the terpene synthase family. It depends on Mg(2+) as a cofactor.

The catalysed reaction is (2E,6E)-farnesyl diphosphate = (+)-eremophilene + diphosphate. It participates in secondary metabolite biosynthesis; terpenoid biosynthesis. In terms of biological role, catalyzes the conversion of (2E,6E)-farnesyl diphosphate (FPP) to yield the bicyclic sesquiterpene eremophilene via a 1,10-cyclization, which requires the abstraction of the pyrophosphate from FPP to yield the (E,E)-germacradienyl cation. The only accepted substrate is farnesyl diphosphate (FPP). This is (+)-eremophilene synthase from Gibberella fujikuroi (strain CBS 195.34 / IMI 58289 / NRRL A-6831) (Bakanae and foot rot disease fungus).